The chain runs to 197 residues: Short chain dehydrogenase ausX (197 aa).

NADP(+)-binding residues include Ile-49, Asp-95, Arg-157, and Tyr-189. The Proton acceptor role is filled by Tyr-189. The active-site Proton donor is the Tyr-189.

It belongs to the short-chain dehydrogenases/reductases (SDR) family.

The protein operates within secondary metabolite biosynthesis; terpenoid biosynthesis. Short chain dehydrogenase; part of the gene cluster A that mediates the biosynthesis of austinol and dehydroaustinol, two fungal meroterpenoids. The first step of the pathway is the synthesis of 3,5-dimethylorsellinic acid by the polyketide synthase ausA. 3,5-dimethylorsellinic acid is then prenylated by the polyprenyl transferase ausN. Further epoxidation by the FAD-dependent monooxygenase ausM and cyclization by the probable terpene cyclase ausL lead to the formation of protoaustinoid A. Protoaustinoid A is then oxidized to spiro-lactone preaustinoid A3 by the combined action of the FAD-binding monooxygenases ausB and ausC, and the dioxygenase ausE. Acid-catalyzed keto-rearrangement and ring contraction of the tetraketide portion of preaustinoid A3 by ausJ lead to the formation of preaustinoid A4. The aldo-keto reductase ausK, with the help of ausH, is involved in the next step by transforming preaustinoid A4 into isoaustinone which is in turn hydroxylated by the P450 monooxygenase ausI to form austinolide. Finally, the cytochrome P450 monooxygenase ausG modifies austinolide to austinol. Austinol can be further modified to dehydroaustinol which forms a diffusible complex with diorcinol that initiates conidiation. Due to genetic rearrangements of the clusters and the subsequent loss of some enzymes, the end products of the Emericella nidulans austinoid biosynthesis clusters are austinol and dehydroaustinol, even if additional enzymes, such as the O-acetyltransferase ausQ and the cytochrome P450 monooxygenase ausR are still functional. This is Short chain dehydrogenase ausX from Emericella nidulans (strain FGSC A4 / ATCC 38163 / CBS 112.46 / NRRL 194 / M139) (Aspergillus nidulans).